We begin with the raw amino-acid sequence, 324 residues long: MSASSVKKSQGMKFAEEQMHKHGWKEGKGLGRRENGICEAIKVKVKCDHAGVGHNSAEQFTFHWWDHVFNKTASSISVEADQDGVTVNRVKDEDAPVTNKKPRKALSNKNMLYGRFVKSATLLSGGEQPVKEPSSSESSDSSGDEDEKLDLSSATKLTDEDLKKVCGGRTAHKGARHGLTMSAKLSRLEEQEREFLAKYGKKEQKNKERDEKLERTQGLPGMNIQQIYSEEGIETNISHESSQHKKKKKKRKRADSERKEESQENGHEEEQMPPSEQEVKSSKKKKSKKKQREESPSTQEEQPTESSDFSMKPKKKKKKKNKSE.

Disordered stretches follow at residues 1–30 (MSASSVKKSQGMKFAEEQMHKHGWKEGKGL) and 123–324 (LSGG…NKSE). Residues 11 to 57 (GMKFAEEQMHKHGWKEGKGLGRRENGICEAIKVKVKCDHAGVGHNSA) form the G-patch domain. A compositionally biased stretch (basic and acidic residues) spans 14–30 (FAEEQMHKHGWKEGKGL). Positions 131–141 (KEPSSSESSDS) are enriched in low complexity. The span at 186 to 215 (SRLEEQEREFLAKYGKKEQKNKERDEKLER) shows a compositional bias: basic and acidic residues. A compositionally biased stretch (basic residues) spans 244–253 (HKKKKKKRKR). Residues 254-270 (ADSERKEESQENGHEEE) show a composition bias toward basic and acidic residues. Positions 296-309 (PSTQEEQPTESSDF) are enriched in polar residues. Over residues 312-324 (KPKKKKKKKNKSE) the composition is skewed to basic residues.

The protein is G patch domain-containing protein 4 (gpatch4) of Xenopus laevis (African clawed frog).